We begin with the raw amino-acid sequence, 154 residues long: Protein X (154 aa).

The segment at 28 to 48 is disordered; it reads RPLPGPLGTLPPASPPAVPTD. The mitochondrial targeting sequence stretch occupies residues 68–117; it reads PCALRFTSARRMETTVNAHGNLPKVLHKRTLGLSAMSTTDLEAYFKDCVF.

This sequence belongs to the orthohepadnavirus protein X family. May form homodimer. May interact with host CEBPA, CFLAR, CREB1, DDB1, E4F1, HBXIP, HSPD1/HSP60, NFKBIA, POLR2E and SMAD4. Interacts with host SMC5-SMC6 complex and induces its degradation. Interacts with host TRPC4AP; leading to prevent ubiquitination of TRPC4AP. Interacts with host PLSCR1; this interaction promotes ubiquitination and degradation of HBx and impairs HBx-mediated cell proliferation. In terms of processing, a fraction may be phosphorylated in insect cells and HepG2 cells, a human hepatoblastoma cell line. Phosphorylated in vitro by host protein kinase C or mitogen-activated protein kinase. N-acetylated in insect cells.

It is found in the host cytoplasm. The protein localises to the host nucleus. It localises to the host mitochondrion. In terms of biological role, multifunctional protein that plays a role in silencing host antiviral defenses and promoting viral transcription. Does not seem to be essential for HBV infection. May be directly involved in development of cirrhosis and liver cancer (hepatocellular carcinoma). Most of cytosolic activities involve modulation of cytosolic calcium. The effect on apoptosis is controversial depending on the cell types in which the studies have been conducted. May induce apoptosis by localizing in mitochondria and causing loss of mitochondrial membrane potential. May also modulate apoptosis by binding host CFLAR, a key regulator of the death-inducing signaling complex (DISC). Promotes viral transcription by using the host E3 ubiquitin ligase DDB1 to target the SMC5-SMC6 complex to proteasomal degradation. This host complex would otherwise bind to viral episomal DNA, and prevents its transcription. Moderately stimulates transcription of many different viral and cellular transcription elements. Promoters and enhancers stimulated by HBx contain DNA binding sites for NF-kappa-B, AP-1, AP-2, c-EBP, ATF/CREB, or the calcium-activated factor NF-AT. This chain is Protein X, found in Hepatitis B virus genotype B2 subtype adw (isolate China/patient4/1996) (HBV-B).